The sequence spans 250 residues: Adenosylcobinamide-GDP ribazoletransferase (250 aa).

The next 6 helical transmembrane spans lie at 33–53 (IASYFPIVGIVIGGILSLFYI), 63–83 (IVMTFIVAFSYVLTGAMHIDG), 109–129 (LGTNGVLALVFMVVLKILFLT), 137–157 (LTALLITPIIGRLSIVFSMMI), 180–200 (FAIAFVISIATSYFILPLAVF), and 203–223 (ILTISLFVTYIVSKYISLRIG).

It belongs to the CobS family. Mg(2+) is required as a cofactor.

It is found in the cell membrane. It carries out the reaction alpha-ribazole + adenosylcob(III)inamide-GDP = adenosylcob(III)alamin + GMP + H(+). The catalysed reaction is alpha-ribazole 5'-phosphate + adenosylcob(III)inamide-GDP = adenosylcob(III)alamin 5'-phosphate + GMP + H(+). Its pathway is cofactor biosynthesis; adenosylcobalamin biosynthesis; adenosylcobalamin from cob(II)yrinate a,c-diamide: step 7/7. Joins adenosylcobinamide-GDP and alpha-ribazole to generate adenosylcobalamin (Ado-cobalamin). Also synthesizes adenosylcobalamin 5'-phosphate from adenosylcobinamide-GDP and alpha-ribazole 5'-phosphate. This Thermoanaerobacter sp. (strain X514) protein is Adenosylcobinamide-GDP ribazoletransferase.